The sequence spans 1269 residues: Protein cramped-like (1269 aa).

Residues 1 to 12 (MTVKLGDGGSGE) show a composition bias toward gly residues. Positions 1-165 (MTVKLGDGGS…GKKVRRQWES (165 aa)) are disordered. 2 stretches are compositionally biased toward basic and acidic residues: residues 13-24 (DGLKKLGKRAAD) and 43-52 (SGTKRDEKTP). Positions 59–74 (PPAPPGAPQAPSPPQG) are enriched in pro residues. Over residues 105–123 (GNAGGSGPRGKGAEGGGSS) the composition is skewed to gly residues. Residues 124 to 147 (SGNVSGVAPAAPAGGSRSSSRNLG) are compositionally biased toward low complexity. Residues 151-165 (GEKEEGKKVRRQWES) show a composition bias toward basic and acidic residues. The SANT domain maps to 161-224 (RQWESWSTED…FYYRTWHKIT (64 aa)). Ser307 is subject to Phosphoserine. Disordered regions lie at residues 450–541 (IQSG…PGAL), 581–666 (DTRP…EVPA), 757–827 (VRPA…NDSD), 976–1034 (EGLS…DSFQ), 1055–1092 (IPLSSSESSSTRLSPPDVSALLDISLPGPPEDALSQGE), and 1115–1157 (VPLS…PSDS). The segment covering 485 to 507 (SSGESSPESAPGEGAALSLSSPD) has biased composition (low complexity). Composition is skewed to basic and acidic residues over residues 508–518 (APDRPPPRHQD) and 526–535 (TPAEGRDSPT). 3 stretches are compositionally biased toward polar residues: residues 757–767 (VRPAQEEQSMT), 774–806 (TVSSRSPRCPRNQASLRSSKTFPPSSAPCSSGL), and 982–1002 (SPLSSDEVTGAISGQDSTGTH). Composition is skewed to low complexity over residues 1055 to 1070 (IPLSSSESSSTRLSPP) and 1125 to 1140 (SDSSKSLPSPSSSPQP). Position 1268 is a phosphoserine (Ser1268).

It belongs to the cramped family.

It localises to the nucleus. The protein is Protein cramped-like of Homo sapiens (Human).